A 358-amino-acid polypeptide reads, in one-letter code: Peptide chain release factor 1 (358 aa).

At Gln232 the chain carries N5-methylglutamine.

The protein belongs to the prokaryotic/mitochondrial release factor family. Methylated by PrmC. Methylation increases the termination efficiency of RF1.

It localises to the cytoplasm. Its function is as follows. Peptide chain release factor 1 directs the termination of translation in response to the peptide chain termination codons UAG and UAA. The protein is Peptide chain release factor 1 of Acidobacterium capsulatum (strain ATCC 51196 / DSM 11244 / BCRC 80197 / JCM 7670 / NBRC 15755 / NCIMB 13165 / 161).